Reading from the N-terminus, the 91-residue chain is Small integral membrane protein 12-A (91 aa).

Residues 12–34 (YAPYITFPVAFVVGAVGYQLEWF) traverse the membrane as a helical segment.

The protein belongs to the SMIM12 family.

It localises to the membrane. This chain is Small integral membrane protein 12-A (smim12-a), found in Xenopus laevis (African clawed frog).